Reading from the N-terminus, the 196-residue chain is uncharacterized protein (196 aa).

Residues 21 to 35 (ESRRKDGSVRRERAV) show a composition bias toward basic and acidic residues. Disordered stretches follow at residues 21 to 53 (ESRR…PGRG) and 65 to 196 (LQLS…KEKE). Residues 66 to 75 (QLSNDASTSK) are compositionally biased toward polar residues. Basic and acidic residues-rich tracts occupy residues 84-94 (ELEKEKLERPL), 100-143 (EKND…KDFK), and 173-196 (KMSK…KEKE).

This is an uncharacterized protein from Schizosaccharomyces pombe (strain 972 / ATCC 24843) (Fission yeast).